The primary structure comprises 80 residues: Putative defensin-like protein 28 (80 aa).

A signal peptide spans 1–22 (MLRANVVVSLVIFAALMQCMNG).

The protein belongs to the DEFL family.

It localises to the secreted. The polypeptide is Putative defensin-like protein 28 (Arabidopsis thaliana (Mouse-ear cress)).